The following is an 868-amino-acid chain: Homeobox-leucine zipper protein HOX29 (868 aa).

A DNA-binding region (homeobox) is located at residues 9–72 (DASKYVRYTP…NRRCREKQRK (64 aa)). Residues 64–106 (RRCREKQRKESSRLQALNRKLTAMNKLLMEENDRLQKQVSQLV) adopt a coiled-coil conformation. The interval 150–171 (VTSGHHHQQQQHNVVQPPPRDA) is disordered. Residues 169 to 397 (RDASPAGLMS…VAHEDTRSVI (229 aa)) form the START domain.

The protein belongs to the HD-ZIP homeobox family. Class III subfamily. In terms of tissue distribution, expressed in phloem.

Its subcellular location is the nucleus. Functionally, probable transcription factor that may be necessary for the proper patterning of vascular bundles. This chain is Homeobox-leucine zipper protein HOX29 (HOX29), found in Oryza sativa subsp. japonica (Rice).